Consider the following 817-residue polypeptide: Protein kintoun (817 aa).

Disordered stretches follow at residues 233–259 (AEST…PRCS), 385–404 (AGAR…RKSC), 410–445 (AGTA…TPEN), and 473–503 (VQTS…KPLC). The span at 386 to 401 (GAREESADSSGADHGR) shows a compositional bias: basic and acidic residues. Phosphoserine is present on residues serine 622 and serine 631. The tract at residues 653–692 (ECSDPDGLQGKEKGVKEECPLSEKENTEHSTTSTADSNSS) is disordered. Positions 661–680 (QGKEKGVKEECPLSEKENTE) are enriched in basic and acidic residues. Residues 681–692 (HSTTSTADSNSS) are compositionally biased toward polar residues.

The protein belongs to the PIH1 family. Kintoun subfamily. Interacts with CFAP300. Interacts with DNAI2 and HSPA1A. Interacts with DNAAF4. Interacts with DNAAF6/PIH1D3.

It is found in the cytoplasm. It localises to the dynein axonemal particle. Functionally, required for cytoplasmic pre-assembly of axonemal dyneins, thereby playing a central role in motility in cilia and flagella. Involved in pre-assembly of dynein arm complexes in the cytoplasm before intraflagellar transport loads them for the ciliary compartment. In Rattus norvegicus (Rat), this protein is Protein kintoun.